The sequence spans 187 residues: Elongation factor P (187 aa).

The residue at position 33 (lysine 33) is an N6-(3,6-diaminohexanoyl)-5-hydroxylysine.

Belongs to the elongation factor P family. Post-translationally, may be beta-lysylated on the epsilon-amino group of Lys-33 by the combined action of EpmA and EpmB, and then hydroxylated on the C5 position of the same residue by EpmC (if this protein is present). Lysylation is critical for the stimulatory effect of EF-P on peptide-bond formation. The lysylation moiety may extend toward the peptidyltransferase center and stabilize the terminal 3-CCA end of the tRNA. Hydroxylation of the C5 position on Lys-33 may allow additional potential stabilizing hydrogen-bond interactions with the P-tRNA.

It localises to the cytoplasm. It participates in protein biosynthesis; polypeptide chain elongation. Functionally, involved in peptide bond synthesis. Alleviates ribosome stalling that occurs when 3 or more consecutive Pro residues or the sequence PPG is present in a protein, possibly by augmenting the peptidyl transferase activity of the ribosome. Modification of Lys-33 is required for alleviation. The sequence is that of Elongation factor P from Blochmanniella floridana.